A 342-amino-acid chain; its full sequence is tRNA dimethylallyltransferase (342 aa).

The tract at residues 1–30 (MSANGPAAEPADGGRAVPAGGGEAVPAGGG) is disordered. Over residues 19-30 (AGGGEAVPAGGG) the composition is skewed to gly residues. 49–56 (GPTAAGKS) contributes to the ATP binding site. 51–56 (TAAGKS) serves as a coordination point for substrate. The interaction with substrate tRNA stretch occupies residues 74-77 (DSMQ).

The protein belongs to the IPP transferase family. In terms of assembly, monomer. The cofactor is Mg(2+).

The enzyme catalyses adenosine(37) in tRNA + dimethylallyl diphosphate = N(6)-dimethylallyladenosine(37) in tRNA + diphosphate. Its function is as follows. Catalyzes the transfer of a dimethylallyl group onto the adenine at position 37 in tRNAs that read codons beginning with uridine, leading to the formation of N6-(dimethylallyl)adenosine (i(6)A). This chain is tRNA dimethylallyltransferase, found in Salinispora arenicola (strain CNS-205).